A 139-amino-acid chain; its full sequence is Nucleoside diphosphate kinase (139 aa).

Residues Lys9, Phe57, Arg85, Thr91, Arg102, and Asn112 each coordinate ATP. The active-site Pros-phosphohistidine intermediate is His115.

Belongs to the NDK family. As to quaternary structure, homotetramer. Mg(2+) serves as cofactor.

The protein resides in the cytoplasm. The enzyme catalyses a 2'-deoxyribonucleoside 5'-diphosphate + ATP = a 2'-deoxyribonucleoside 5'-triphosphate + ADP. It carries out the reaction a ribonucleoside 5'-diphosphate + ATP = a ribonucleoside 5'-triphosphate + ADP. Its function is as follows. Major role in the synthesis of nucleoside triphosphates other than ATP. The ATP gamma phosphate is transferred to the NDP beta phosphate via a ping-pong mechanism, using a phosphorylated active-site intermediate. The polypeptide is Nucleoside diphosphate kinase (Neorickettsia sennetsu (strain ATCC VR-367 / Miyayama) (Ehrlichia sennetsu)).